Consider the following 205-residue polypeptide: Large ribosomal subunit protein uL4 (205 aa).

The span at 43-60 shows a compositional bias: polar residues; that stretch reads ARSGNRAQQTRAEVSAST. The tract at residues 43-96 is disordered; the sequence is ARSGNRAQQTRAEVSASTHKPWRQKGTGRARSGRASSPIWRGGGVTFPNKPNEN. Residues 62 to 74 are compositionally biased toward basic residues; the sequence is KPWRQKGTGRARS.

Belongs to the universal ribosomal protein uL4 family. In terms of assembly, part of the 50S ribosomal subunit.

One of the primary rRNA binding proteins, this protein initially binds near the 5'-end of the 23S rRNA. It is important during the early stages of 50S assembly. It makes multiple contacts with different domains of the 23S rRNA in the assembled 50S subunit and ribosome. Functionally, forms part of the polypeptide exit tunnel. The chain is Large ribosomal subunit protein uL4 from Thiobacillus denitrificans (strain ATCC 25259 / T1).